A 126-amino-acid polypeptide reads, in one-letter code: Small ribosomal subunit protein uS13 (126 aa).

Residues 95–126 form a disordered region; it reads GLPVRGQQTRTNARTRKGKRKTVGGTKKAKAK. Basic residues predominate over residues 107-126; it reads ARTRKGKRKTVGGTKKAKAK.

This sequence belongs to the universal ribosomal protein uS13 family. In terms of assembly, part of the 30S ribosomal subunit. Forms a loose heterodimer with protein S19. Forms two bridges to the 50S subunit in the 70S ribosome.

Functionally, located at the top of the head of the 30S subunit, it contacts several helices of the 16S rRNA. In the 70S ribosome it contacts the 23S rRNA (bridge B1a) and protein L5 of the 50S subunit (bridge B1b), connecting the 2 subunits; these bridges are implicated in subunit movement. Contacts the tRNAs in the A and P-sites. This chain is Small ribosomal subunit protein uS13, found in Aquifex aeolicus (strain VF5).